A 158-amino-acid polypeptide reads, in one-letter code: NKG2-F type II integral membrane protein (158 aa).

Residues 1–12 (MNKQRGTYSEVS) are compositionally biased toward polar residues. Residues 1-30 (MNKQRGTYSEVSLAQDPKRQQRKLKGNKSS) form a disordered region. Residues 1-74 (MNKQRGTYSE…LPPPERLTAE (74 aa)) are Cytoplasmic-facing. The chain crosses the membrane as a helical span at residues 75 to 95 (VLGIICIVLMATVLKTIVLIP). Residues 96–158 (CIGVLEQNNF…VLQRTLICFL (63 aa)) lie on the Extracellular side of the membrane.

As to quaternary structure, can form disulfide-bonded heterodimer with CD94. As to expression, natural killer cells.

The protein resides in the membrane. Functionally, may play a role as a receptor for the recognition of MHC class I HLA-E molecules by NK cells. This chain is NKG2-F type II integral membrane protein (KLRC4), found in Pan troglodytes (Chimpanzee).